Consider the following 266-residue polypeptide: Small ribosomal subunit protein uS2 (266 aa).

It belongs to the universal ribosomal protein uS2 family.

The protein is Small ribosomal subunit protein uS2 of Bartonella tribocorum (strain CIP 105476 / IBS 506).